Consider the following 217-residue polypeptide: UPF0502 protein ETA_20480 (217 aa).

The segment at 169–188 is disordered; the sequence is GEVDESSRADGHHPDDHRGD. The span at 173–188 shows a compositional bias: basic and acidic residues; the sequence is ESSRADGHHPDDHRGD.

It belongs to the UPF0502 family.

The polypeptide is UPF0502 protein ETA_20480 (Erwinia tasmaniensis (strain DSM 17950 / CFBP 7177 / CIP 109463 / NCPPB 4357 / Et1/99)).